The primary structure comprises 287 residues: 2-dehydro-3-deoxyphosphooctonate aldolase (287 aa).

It belongs to the KdsA family.

The protein resides in the cytoplasm. The enzyme catalyses D-arabinose 5-phosphate + phosphoenolpyruvate + H2O = 3-deoxy-alpha-D-manno-2-octulosonate-8-phosphate + phosphate. It participates in carbohydrate biosynthesis; 3-deoxy-D-manno-octulosonate biosynthesis; 3-deoxy-D-manno-octulosonate from D-ribulose 5-phosphate: step 2/3. The protein operates within bacterial outer membrane biogenesis; lipopolysaccharide biosynthesis. This chain is 2-dehydro-3-deoxyphosphooctonate aldolase, found in Nitrobacter hamburgensis (strain DSM 10229 / NCIMB 13809 / X14).